Consider the following 299-residue polypeptide: tRNA dimethylallyltransferase (299 aa).

ATP is bound at residue 13 to 20 (GPTASGKT). 15–20 (TASGKT) contacts substrate. The segment at 38–41 (DSRQ) is interaction with substrate tRNA.

It belongs to the IPP transferase family. Monomer. Requires Mg(2+) as cofactor.

It carries out the reaction adenosine(37) in tRNA + dimethylallyl diphosphate = N(6)-dimethylallyladenosine(37) in tRNA + diphosphate. Its function is as follows. Catalyzes the transfer of a dimethylallyl group onto the adenine at position 37 in tRNAs that read codons beginning with uridine, leading to the formation of N6-(dimethylallyl)adenosine (i(6)A). The chain is tRNA dimethylallyltransferase from Synechococcus sp. (strain CC9605).